The sequence spans 90 residues: UPF0297 protein OEOE_1166 (90 aa).

Belongs to the UPF0297 family.

The protein is UPF0297 protein OEOE_1166 of Oenococcus oeni (strain ATCC BAA-331 / PSU-1).